Here is a 413-residue protein sequence, read N- to C-terminus: L-cysteine:1D-myo-inositol 2-amino-2-deoxy-alpha-D-glucopyranoside ligase (413 aa).

Position 43 (C43) interacts with Zn(2+). Residues 43–46 (CGIT), T58, and 81–83 (NIT) contribute to the L-cysteinyl-5'-AMP site. Residues 45–55 (ITPYDATHLGH) carry the 'HIGH' region motif. The 'ERGGDP' region motif lies at 187-192 (ERGGDP). Residue W227 participates in L-cysteinyl-5'-AMP binding. C231 provides a ligand contact to Zn(2+). Position 249–251 (249–251 (GND)) interacts with L-cysteinyl-5'-AMP. H256 is a binding site for Zn(2+). V283 is a binding site for L-cysteinyl-5'-AMP. A 'KMSKS' region motif is present at residues 289–293 (KMSKS).

Belongs to the class-I aminoacyl-tRNA synthetase family. MshC subfamily. As to quaternary structure, monomer. The cofactor is Zn(2+).

It carries out the reaction 1D-myo-inositol 2-amino-2-deoxy-alpha-D-glucopyranoside + L-cysteine + ATP = 1D-myo-inositol 2-(L-cysteinylamino)-2-deoxy-alpha-D-glucopyranoside + AMP + diphosphate + H(+). In terms of biological role, catalyzes the ATP-dependent condensation of GlcN-Ins and L-cysteine to form L-Cys-GlcN-Ins. In Gordonia bronchialis (strain ATCC 25592 / DSM 43247 / BCRC 13721 / JCM 3198 / KCTC 3076 / NBRC 16047 / NCTC 10667) (Rhodococcus bronchialis), this protein is L-cysteine:1D-myo-inositol 2-amino-2-deoxy-alpha-D-glucopyranoside ligase.